Consider the following 144-residue polypeptide: Large ribosomal subunit protein uL16 (144 aa).

This sequence belongs to the universal ribosomal protein uL16 family. Part of the 50S ribosomal subunit.

Binds 23S rRNA and is also seen to make contacts with the A and possibly P site tRNAs. In Oceanobacillus iheyensis (strain DSM 14371 / CIP 107618 / JCM 11309 / KCTC 3954 / HTE831), this protein is Large ribosomal subunit protein uL16.